The sequence spans 505 residues: Cytochrome P450 monooxygenase iliC (505 aa).

Residues leucine 6 to leucine 26 traverse the membrane as a helical segment. Cysteine 453 provides a ligand contact to heme.

It belongs to the cytochrome P450 family. Heme serves as cofactor.

It localises to the membrane. The catalysed reaction is (3E,5S)-3-[(2E,4E,8S,10E,12Z)-1-hydroxy-4,8-dimethyltetradeca-2,4,10,12-tetraen-1-ylidene]-5-[(4-hydroxyphenyl)methyl]pyrrolidine-2,4-dione + reduced [NADPH--hemoprotein reductase] + O2 = 3-[(2E,4E,8S,10E,12Z)-4,8-dimethyltetradeca-2,4,10,12-tetraenoyl]-4-hydroxy-5-(4-hydroxyphenyl)-1,2-dihydropyridin-2-one + oxidized [NADPH--hemoprotein reductase] + 2 H2O. It participates in mycotoxin biosynthesis. Cytochrome P450 monooxygenase; part of the gene cluster that mediates the biosynthesis of ilicicolin H, a 4-hydroxy-2-pyridonealkaloid that has potent and broad antifungal activities by inhibiting the mitochondrial respiration chain. IliC catalyzes the ring expansion of the tetramate intermediate to the acyclic 2-pyridone intermediate that contains the trans bis-diene chain. The biosynthesis of ilicicolin H starts with formation of the tetramic acid by the hybrid PKS-NRPS synthetase iliA with the partnering trans-enoyl reductase iliB since iliA lacks a designated enoylreductase (ER) domain. The cytochrome P450 monooxygenase iliC then catalyzes the ring expansion of the tetramate to the acyclic 2-pyridone. The pericyclase iliD further converts the acyclic 2-pyridone into 8-epi-ilicicolin H. 8-epi-ilicicolin H might then spontaneously convert to ilicicolin H since ilicicolin H is produced in the absence of the epimerase iliE, in contrast to what was observed for the Talaromyces variabilis ilicolin H biosynthetic pathway. This chain is Cytochrome P450 monooxygenase iliC, found in Neonectria sp. (strain DH2).